The sequence spans 172 residues: 3-hydroxydecanoyl-[acyl-carrier-protein] dehydratase (172 aa).

The active site involves His-71.

It belongs to the thioester dehydratase family. FabA subfamily. Homodimer.

Its subcellular location is the cytoplasm. It catalyses the reaction a (3R)-hydroxyacyl-[ACP] = a (2E)-enoyl-[ACP] + H2O. The catalysed reaction is (3R)-hydroxydecanoyl-[ACP] = (2E)-decenoyl-[ACP] + H2O. The enzyme catalyses (2E)-decenoyl-[ACP] = (3Z)-decenoyl-[ACP]. It functions in the pathway lipid metabolism; fatty acid biosynthesis. Functionally, necessary for the introduction of cis unsaturation into fatty acids. Catalyzes the dehydration of (3R)-3-hydroxydecanoyl-ACP to E-(2)-decenoyl-ACP and then its isomerization to Z-(3)-decenoyl-ACP. Can catalyze the dehydratase reaction for beta-hydroxyacyl-ACPs with saturated chain lengths up to 16:0, being most active on intermediate chain length. In Escherichia coli (strain 55989 / EAEC), this protein is 3-hydroxydecanoyl-[acyl-carrier-protein] dehydratase.